A 239-amino-acid chain; its full sequence is Tryptophan synthase alpha chain (239 aa).

Catalysis depends on proton acceptor residues E34 and D45.

The protein belongs to the TrpA family. In terms of assembly, tetramer of two alpha and two beta chains.

It carries out the reaction (1S,2R)-1-C-(indol-3-yl)glycerol 3-phosphate + L-serine = D-glyceraldehyde 3-phosphate + L-tryptophan + H2O. It functions in the pathway amino-acid biosynthesis; L-tryptophan biosynthesis; L-tryptophan from chorismate: step 5/5. Its function is as follows. The alpha subunit is responsible for the aldol cleavage of indoleglycerol phosphate to indole and glyceraldehyde 3-phosphate. This is Tryptophan synthase alpha chain from Thermotoga petrophila (strain ATCC BAA-488 / DSM 13995 / JCM 10881 / RKU-1).